We begin with the raw amino-acid sequence, 784 residues long: Melanoma-associated antigen D1 (784 aa).

Residues 41 to 67 (PTNQATAAASGPNASPQSSQPPSANEV) are disordered. The segment covering 47–65 (AAASGPNASPQSSQPPSAN) has biased composition (low complexity). Tyrosine 97 is modified (phosphotyrosine). Composition is skewed to polar residues over residues 195-214 (PTAE…TSQA), 232-246 (AQTS…NLES), 259-269 (NNLNVEESSSG), and 306-320 (LAWQ…QPAR). A disordered region spans residues 195 to 339 (PTAETQTQNI…PARQTPPAWQ (145 aa)). 19 repeat units span residues 302-307 (WQTPLA), 308-313 (WQNPSG), 314-319 (WQNQPA), 338-343 (WQNPVA), 344-349 (WQNPVI), 350-355 (WPNPVI), 356-361 (WQNPVI), 362-367 (WPNPIV), 368-373 (WPGPVV), 374-379 (WPNPLA), 380-385 (WQNPPG), 386-391 (WQTPPG), 392-397 (WQTPPG), 398-403 (WQGPPD), 404-409 (WQGPPD), 410-415 (WPLPPD), 416-421 (WPLPPD), 422-427 (WPLPTD), and 428-433 (WPLPPD). Residues 302–450 (WQTPLAWQNP…VPPDWQNLRP (149 aa)) are 22 X 6 AA tandem repeats of W-[PQ]-X-P-X-X. The interval 379–418 (AWQNPPGWQTPPGWQTPPGWQGPPDWQGPPDWPLPPDWPL) is disordered. Low complexity predominate over residues 383-403 (PPGWQTPPGWQTPPGWQGPPD). Positions 404 to 418 (WQGPPDWPLPPDWPL) are enriched in pro residues. A 20; approximate repeat occupies 434–438 (WIPTD). 2 consecutive repeat copies span residues 439 to 444 (WPVPPD) and 445 to 450 (WQNLRP). Residues 441 to 471 (VPPDWQNLRPSPNLRPSPNSRASQNLGASQP) are disordered. The segment covering 447 to 461 (NLRPSPNLRPSPNSR) has biased composition (low complexity). One can recognise an MAGE domain in the interval 477–675 (LQERANKLVK…RDWTAQFMEA (199 aa)).

In terms of assembly, interacts with DLX5, DLX7 and MSX2 and forms homomultimers. Interacts with UNC5A. Interacts with TRIM28 and PJA1. Interacts with NGFR/p75NTR and RORA.

The protein resides in the cytoplasm. It is found in the cell membrane. It localises to the nucleus. In terms of biological role, involved in the apoptotic response after nerve growth factor (NGF) binding in neuronal cells. Inhibits cell cycle progression, and facilitates NGFR-mediated apoptosis. May act as a regulator of the function of DLX family members. May enhance ubiquitin ligase activity of RING-type zinc finger-containing E3 ubiquitin-protein ligases. Proposed to act through recruitment and/or stabilization of the Ubl-conjugating enzyme (E2) at the E3:substrate complex. Plays a role in the circadian rhythm regulation. May act as RORA co-regulator, modulating the expression of core clock genes such as BMAL1 and NFIL3, induced, or NR1D1, repressed. The sequence is that of Melanoma-associated antigen D1 (MAGED1) from Sus scrofa (Pig).